Here is a 404-residue protein sequence, read N- to C-terminus: BRCA1-A complex subunit Abraxas 1 (404 aa).

The MPN domain maps to 7–161 (YIRVSGFVLG…YAVYRSHGSQ (155 aa)). Residues 219–268 (MNNSLQGELKMACKKVEESERLVEKLLADVSDLRRMVNERKQELREISAD) are a coiled coil. Positions 339–404 (GRLGRGGGTS…NLDVSNSPVF (66 aa)) are disordered. Polar residues predominate over residues 391 to 404 (RNGNNLDVSNSPVF). Phosphoserine is present on S401. A pSXXF motif motif is present at residues 401 to 404 (SPVF).

This sequence belongs to the FAM175 family. Abraxas subfamily. As to quaternary structure, component of the BRCA1-A complex. Component of the BRISC complex. Homodimer. Interacts directly (when phosphorylated at Ser-401) with brca1. The phosphorylated homodimer can interact directly with two brca1 chains, giving rise to a heterotetramer. Post-translationally, phosphorylation of Ser-401 of the pSXXF motif by ATM or ATR constitutes a specific recognition motif for the BRCT domain of BRCA1.

The protein localises to the nucleus. Functionally, involved in DNA damage response and double-strand break (DSB) repair. Component of the BRCA1-A complex, acting as a central scaffold protein that assembles the various components of the complex and mediates the recruitment of brca1. The BRCA1-A complex specifically recognizes 'Lys-63'-linked ubiquitinated histones H2A and H2AX at DNA lesion sites, leading to target the brca1-bard1 heterodimer to sites of DNA damage at DSBs. This complex also possesses deubiquitinase activity that specifically removes 'Lys-63'-linked ubiquitin on histones H2A and H2AX. The polypeptide is BRCA1-A complex subunit Abraxas 1 (Salmo salar (Atlantic salmon)).